The sequence spans 996 residues: Filament-like plant protein 5 (996 aa).

Residues 1–20 form a disordered region; that stretch reads MEGRGWPWKRKSSDKATTEK. Coiled coils occupy residues 59–94, 133–248, 280–301, and 359–387; these read THMSRMEDQVKLFEVQVKDLKEKLTLAHSEINTKES, TAED…KYDL, VKKIAKLEAECHRLRGLLRKKL, and LTRRTLEMEEEIQTLKEHLSARNNELQVS. Disordered stretches follow at residues 409 to 482 and 496 to 534; these read NNDK…SSSR and VGSDPDGANSASKSSNSVCSRRSVEKQSSSKSSEPDEDT. The span at 417–428 shows a compositional bias: low complexity; the sequence is SNSRNLSESLSS. The segment covering 471-482 has biased composition (polar residues); sequence VNGSSKPRSSSR. The segment covering 503 to 527 has biased composition (low complexity); sequence ANSASKSSNSVCSRRSVEKQSSSKS. 3 coiled-coil regions span residues 601–622, 737–841, and 876–906; these read QNSEKEQKNTKQQDLEAAVANI, DSSC…FTTE, and NQEKDIVSATEKLAACQETIHLLSQQLQSLQ. A disordered region spans residues 962 to 996; sequence IMKSSSVSSSSKEDNEKHTRGLGRFFSSKSKNSAR.

This sequence belongs to the FPP family. In terms of assembly, interacts with WPP/MAF proteins.

In Arabidopsis thaliana (Mouse-ear cress), this protein is Filament-like plant protein 5 (FPP5).